The primary structure comprises 510 residues: Acyl-CoA desaturase 1 (510 aa).

At 1 to 112 the chain is on the cytoplasmic side; that stretch reads MPTSGTTIEL…TLNNWHQHLN (112 aa). A helical membrane pass occupies residues 113-133; it reads WLNMVLVCGMPMIGWYFALSG. Residues 134–138 lie on the Lumenal side of the membrane; the sequence is KVPLH. Residues 139–159 traverse the membrane as a helical segment; the sequence is LNVFLFSVFYYAVGGVSITAG. Residues 160–255 are Cytoplasmic-facing; it reads YHRLWSHRSY…DWTIRFQHRH (96 aa). The Fe cation site is built by His161, His166, His198, His201, and His202. The short motif at 161 to 166 is the Histidine box-1 element; that stretch reads HRLWSH. A Histidine box-2 motif is present at residues 198–202; the sequence is HRIHH. Residues 256–276 traverse the membrane as a helical segment; it reads YILLMLLTAFVIPTLICGYFF. Residues 277 to 280 lie on the Lumenal side of the membrane; it reads NDYM. Residues 281-301 form a helical membrane-spanning segment; that stretch reads GGLIYAGFIRVFVIQQATFCI. At 302–510 the chain is on the cytoplasmic side; it reads NSLAHYIGTQ…GEIYETGKFF (209 aa). Fe cation contacts are provided by His306, His335, His338, and His339. The Histidine box-3 signature appears at 335–339; it reads HNFHH. One can recognise a Cytochrome b5 heme-binding domain in the interval 409–487; the sequence is LPMWDKQTFL…LADMRVAVIK (79 aa). Heme-binding residues include His444 and His470.

Belongs to the fatty acid desaturase type 1 family. It depends on Fe(2+) as a cofactor.

It localises to the endoplasmic reticulum membrane. The enzyme catalyses octadecanoyl-CoA + 2 Fe(II)-[cytochrome b5] + O2 + 2 H(+) = (9Z)-octadecenoyl-CoA + 2 Fe(III)-[cytochrome b5] + 2 H2O. It carries out the reaction hexadecanoyl-CoA + 2 Fe(II)-[cytochrome b5] + O2 + 2 H(+) = (9Z)-hexadecenoyl-CoA + 2 Fe(III)-[cytochrome b5] + 2 H2O. In terms of biological role, stearoyl-CoA desaturase that utilizes O(2) and electrons from reduced cytochrome b5 to introduce the first double bond into saturated fatty acyl-CoA substrates. Catalyzes the insertion of a cis double bond at the delta-9 position into fatty acyl-CoA substrates including palmitoyl-CoA and stearoyl-CoA. Required for the biosynthesis of membrane phospholipids, cholesterol esters and triglycerides. Regulates fatty acid desaturation, that is, the ratio of unsaturated versus saturated fatty acyl chains, by competing with the acyltransferase STC1 for the common substrate C16:0-CoA. SCT1 sequesters C16:0-CoA into lipids, thereby shielding it from desaturation by OLE1. This chain is Acyl-CoA desaturase 1 (OLE1), found in Saccharomyces cerevisiae (strain ATCC 204508 / S288c) (Baker's yeast).